The primary structure comprises 169 residues: Phosphopantetheine adenylyltransferase (169 aa).

A substrate-binding site is contributed by serine 8. Residues 8–9 (SF) and histidine 16 contribute to the ATP site. Residues lysine 40, threonine 72, and arginine 86 each contribute to the substrate site. ATP is bound by residues 87 to 89 (GLR), glutamate 97, and 122 to 128 (YSFLSSS).

Belongs to the bacterial CoaD family. Homohexamer. Mg(2+) serves as cofactor.

It is found in the cytoplasm. It carries out the reaction (R)-4'-phosphopantetheine + ATP + H(+) = 3'-dephospho-CoA + diphosphate. Its pathway is cofactor biosynthesis; coenzyme A biosynthesis; CoA from (R)-pantothenate: step 4/5. Its function is as follows. Reversibly transfers an adenylyl group from ATP to 4'-phosphopantetheine, yielding dephospho-CoA (dPCoA) and pyrophosphate. The chain is Phosphopantetheine adenylyltransferase from Cyanothece sp. (strain PCC 7425 / ATCC 29141).